We begin with the raw amino-acid sequence, 395 residues long: Protein SGT1 (395 aa).

Lysine 32 is covalently cross-linked (Glycyl lysine isopeptide (Lys-Gly) (interchain with G-Cter in ubiquitin)). The tract at residues 137-175 (KKNKKQKDSTNKHTIKPVESIENRGDNNSSHSPISPLKI) is disordered. Residues serine 168 and serine 171 each carry the phosphoserine modification. Residues 182 to 277 (SPKFKIDWYQ…IDSTQWKKLE (96 aa)) form the CS domain. The SGS domain occupies 312 to 395 (SYPSSSKKKI…PPEGMEPKHW (84 aa)). The interval 373–395 (DWEDVSKGTVKTSPPEGMEPKHW) is disordered.

The protein belongs to the SGT1 family. In terms of assembly, interacts with SKP1/CBF3D. Part of SCF E3 ubiquitin ligase complexes containing SKP1, CDC53, HRT1 and some F-box proteins. Interacts with CIR1/CDC35.

Functionally, involved in ubiquitination and subsequent proteasomal degradation of target proteins. Required for both entry into S phase and kinetochore function. Also involved in cyclic AMP (cAMP) pathway, possibly by participating in the assembly or the conformational activation of specific multiprotein complexes. The protein is Protein SGT1 of Saccharomyces cerevisiae (strain ATCC 204508 / S288c) (Baker's yeast).